Here is a 248-residue protein sequence, read N- to C-terminus: Small ribosomal subunit protein uS2 (248 aa).

This sequence belongs to the universal ribosomal protein uS2 family.

This Leptothrix cholodnii (strain ATCC 51168 / LMG 8142 / SP-6) (Leptothrix discophora (strain SP-6)) protein is Small ribosomal subunit protein uS2.